The following is a 350-amino-acid chain: Uroporphyrinogen decarboxylase (350 aa).

Residues R28–R32, D78, Y155, S210, and H325 contribute to the substrate site.

Belongs to the uroporphyrinogen decarboxylase family. As to quaternary structure, homodimer.

The protein localises to the cytoplasm. It catalyses the reaction uroporphyrinogen III + 4 H(+) = coproporphyrinogen III + 4 CO2. It functions in the pathway porphyrin-containing compound metabolism; protoporphyrin-IX biosynthesis; coproporphyrinogen-III from 5-aminolevulinate: step 4/4. Functionally, catalyzes the decarboxylation of four acetate groups of uroporphyrinogen-III to yield coproporphyrinogen-III. The polypeptide is Uroporphyrinogen decarboxylase (Picosynechococcus sp. (strain ATCC 27264 / PCC 7002 / PR-6) (Agmenellum quadruplicatum)).